Here is a 496-residue protein sequence, read N- to C-terminus: Ammonium transporter 1 member 2 (496 aa).

The next 11 membrane-spanning stretches (helical) occupy residues 39 to 59 (LLFS…LCAG), 74 to 94 (VLDA…FAFG), 120 to 140 (FFLF…GSIA), 148 to 168 (YLIY…HWIW), 192 to 212 (FAGS…GALI), 236 to 256 (LVVL…PGSF), 274 to 296 (SAVG…TTLF), 307 to 327 (VIDV…GCSV), 331 to 351 (WAAI…NALA), 360 to 380 (LEAA…TALF), and 412 to 432 (IVVI…LFLV).

This sequence belongs to the ammonia transporter channel (TC 1.A.11.2) family. As to expression, expressed in exodermis, sclerenchyma, endodermis and pericycle cells of primary root tips.

The protein resides in the membrane. Ammonium transporter probably involved in ammonium uptake from the soil and ammonium uptake and retrieval in the vascular system. The protein is Ammonium transporter 1 member 2 (AMT1-2) of Oryza sativa subsp. japonica (Rice).